The sequence spans 174 residues: Protein-lysine myristoyltransferase HlyC (174 aa).

Active-site residues include H23 and D92. H151 contacts heme.

It belongs to the RTX toxin acyltransferase family. As to quaternary structure, monomer. In terms of processing, proteolytically cleaved by the protease systems ClpAP, ClpXP and FtsH, leading to its degradation.

It localises to the cytoplasm. The catalysed reaction is tetradecanoyl-[ACP] + L-lysyl-[protein] = N(6)-tetradecanoyl-L-lysyl-[protein] + holo-[ACP] + H(+). The acyltransferase activity is inhibited by heme. Protein-lysine myristoyltransferase that catalyzes myristoylation of the protoxin (HlyA) at two internal lysine residues, thereby converting it to the active toxin. The sequence is that of Protein-lysine myristoyltransferase HlyC from Escherichia coli.